Consider the following 236-residue polypeptide: Cell division protein FtsQ (236 aa).

Residues 1–14 are Cytoplasmic-facing; the sequence is MWDNHQALNQVADW. Residues 15–37 form a helical membrane-spanning segment; the sequence is LFTLAGLTTIYLMVQWTIHLPLL. The POTRA domain occupies 37–111; that stretch reads LPLKEVHIRS…NGLDVVVEEH (75 aa). Over 38 to 236 the chain is Periplasmic; it reads PLKEVHIRSN…VSGFAARGTR (199 aa).

It belongs to the FtsQ/DivIB family. FtsQ subfamily. In terms of assembly, part of a complex composed of FtsB, FtsL and FtsQ.

Its subcellular location is the cell inner membrane. Its function is as follows. Essential cell division protein. May link together the upstream cell division proteins, which are predominantly cytoplasmic, with the downstream cell division proteins, which are predominantly periplasmic. May control correct divisome assembly. The sequence is that of Cell division protein FtsQ from Nitrosospira multiformis (strain ATCC 25196 / NCIMB 11849 / C 71).